Reading from the N-terminus, the 255-residue chain is Hydroxyacylglutathione hydrolase (255 aa).

Zn(2+) is bound by residues histidine 56, histidine 58, aspartate 60, histidine 61, histidine 114, aspartate 133, and histidine 171.

It belongs to the metallo-beta-lactamase superfamily. Glyoxalase II family. As to quaternary structure, monomer. The cofactor is Zn(2+).

The enzyme catalyses an S-(2-hydroxyacyl)glutathione + H2O = a 2-hydroxy carboxylate + glutathione + H(+). The protein operates within secondary metabolite metabolism; methylglyoxal degradation; (R)-lactate from methylglyoxal: step 2/2. Its function is as follows. Thiolesterase that catalyzes the hydrolysis of S-D-lactoyl-glutathione to form glutathione and D-lactic acid. This chain is Hydroxyacylglutathione hydrolase, found in Cereibacter sphaeroides (strain ATCC 17029 / ATH 2.4.9) (Rhodobacter sphaeroides).